The sequence spans 315 residues: Rhomboid-related protein 4 (315 aa).

At 1–21 (MQRRTRGINTGLLLLLSQVFQ) the chain is on the cytoplasmic side. Residues 22-42 (IGINNIPPVTLATLAVNVWFF) form a helical membrane-spanning segment. Residues 43–103 (LNPWKPLYHS…KLERRLGSRW (61 aa)) are Lumenal-facing. The helical transmembrane segment at 104 to 124 (FAYVIATFSLLTGVVYLLLQF) threads the bilayer. Residues 125–137 (TVAELLNQPDFKR) lie on the Cytoplasmic side of the membrane. A helical membrane pass occupies residues 138-154 (NCAVGFSGVLFALKVLS). Ser-144 (nucleophile) is an active-site residue. Residues 155–180 (NHYCPGGFVNILGFPVPNRFACWAEL) lie on the Lumenal side of the membrane. A helical transmembrane segment spans residues 181–201 (VAIHFCTPGTSFAGHLAGILV). His-195 is an active-site residue. The Cytoplasmic segment spans residues 202–315 (GLMYTQGPLK…RQRLHRFDGQ (114 aa)). Residues 269–284 (SEEEQLERALRASIWD) are ubiquitin-binding domain (UBD). Residues 301–315 (PEEMRRQRLHRFDGQ) form a VCP/p97-interacting motif (VIM) region.

It belongs to the peptidase S54 family. In terms of assembly, interacts with BIK and STEAP3. Interacts (via C-terminal domain) with VCP/P97. Interacts with ubiquitin and ubiquitinated proteins. Expressed in testis (at protein level). Expressed in intestine, lung, brain, kidney, epididymis, stomach, muscle, spleen, liver, heart and testis.

The protein localises to the endoplasmic reticulum membrane. The protein resides in the mitochondrion membrane. The enzyme catalyses Cleaves type-1 transmembrane domains using a catalytic dyad composed of serine and histidine that are contributed by different transmembrane domains.. With respect to regulation, inhibited by aprotinin. Functionally, intramembrane-cleaving serine protease that cleaves single transmembrane or multi-pass membrane proteins in the hydrophobic plane of the membrane, luminal loops and juxtamembrane regions. Involved in regulated intramembrane proteolysis and the subsequent release of functional polypeptides from their membrane anchors. Functional component of endoplasmic reticulum-associated degradation (ERAD) for misfolded membrane proteins. Required for the degradation process of some specific misfolded endoplasmic reticulum (ER) luminal proteins. Participates in the transfer of misfolded proteins from the ER to the cytosol, where they are destroyed by the proteasome in a ubiquitin-dependent manner. Functions in BIK, MPZ, PKD1, PTCRA, RHO, STEAP3 and TRAC processing. Involved in the regulation of exosomal secretion; inhibits the TSAP6-mediated secretion pathway. Involved in the regulation of apoptosis; modulates BIK-mediated apoptotic activity. Also plays a role in the regulation of spermatogenesis; inhibits apoptotic activity in spermatogonia. This Mus musculus (Mouse) protein is Rhomboid-related protein 4 (Rhbdd1).